A 289-amino-acid polypeptide reads, in one-letter code: Splicing factor C9orf78 (289 aa).

Over residues 1 to 12 (MPVVRKIFRRRR) the composition is skewed to basic residues. The interval 1–27 (MPVVRKIFRRRRGDSESEEDEQDSEEV) is disordered. Residues 5–58 (RKIFRRRRGDSESEEDEQDSEEVRLKLEETREVQNLRKRPNGVSAVALLVGEKV) form an interaction with SNRNP200 region. Ser15 and Ser17 each carry phosphoserine. A Phosphotyrosine modification is found at Tyr147. Residues 232 to 283 (LNAPIRRNKEEPKARPLRVGDTEKPEPERSPPNRKRPANEKATDDYHYEKFK) are compositionally biased toward basic and acidic residues. The interval 232-289 (LNAPIRRNKEEPKARPLRVGDTEKPEPERSPPNRKRPANEKATDDYHYEKFKKMNRRY) is disordered. Position 253 is a phosphothreonine (Thr253). Position 261 is a phosphoserine (Ser261).

This sequence belongs to the TLS1 family. In terms of assembly, component of the spliceosome. Interacts with SNRNP200; the interaction is direct. Interacts with PRPF8.

The protein localises to the nucleus. The protein resides in the chromosome. Its subcellular location is the centromere. Its function is as follows. Plays a role in pre-mRNA splicing by promoting usage of the upstream 3'-splice site at alternative NAGNAG splice sites; these are sites featuring alternative acceptor motifs separated by only a few nucleotides. May also modulate exon inclusion events. Plays a role in spliceosomal remodeling by displacing WBP4 from SNRNP200 and may act to inhibit SNRNP200 helicase activity. Binds U5 snRNA. Required for proper chromosome segregation. Not required for splicing of shelterin components. The sequence is that of Splicing factor C9orf78 (C9orf78) from Homo sapiens (Human).